The following is a 198-amino-acid chain: FMN-dependent NADH:quinone oxidoreductase 2 (198 aa).

An FMN-binding site is contributed by 136 to 139 (SRGG).

It belongs to the azoreductase type 1 family. As to quaternary structure, homodimer. It depends on FMN as a cofactor.

It carries out the reaction 2 a quinone + NADH + H(+) = 2 a 1,4-benzosemiquinone + NAD(+). The catalysed reaction is N,N-dimethyl-1,4-phenylenediamine + anthranilate + 2 NAD(+) = 2-(4-dimethylaminophenyl)diazenylbenzoate + 2 NADH + 2 H(+). Quinone reductase that provides resistance to thiol-specific stress caused by electrophilic quinones. Functionally, also exhibits azoreductase activity. Catalyzes the reductive cleavage of the azo bond in aromatic azo compounds to the corresponding amines. In Clostridium perfringens (strain 13 / Type A), this protein is FMN-dependent NADH:quinone oxidoreductase 2.